The following is a 209-amino-acid chain: ATP phosphoribosyltransferase (209 aa).

Belongs to the ATP phosphoribosyltransferase family. Short subfamily. In terms of assembly, heteromultimer composed of HisG and HisZ subunits.

Its subcellular location is the cytoplasm. The catalysed reaction is 1-(5-phospho-beta-D-ribosyl)-ATP + diphosphate = 5-phospho-alpha-D-ribose 1-diphosphate + ATP. Its pathway is amino-acid biosynthesis; L-histidine biosynthesis; L-histidine from 5-phospho-alpha-D-ribose 1-diphosphate: step 1/9. Functionally, catalyzes the condensation of ATP and 5-phosphoribose 1-diphosphate to form N'-(5'-phosphoribosyl)-ATP (PR-ATP). Has a crucial role in the pathway because the rate of histidine biosynthesis seems to be controlled primarily by regulation of HisG enzymatic activity. This chain is ATP phosphoribosyltransferase, found in Caldicellulosiruptor saccharolyticus (strain ATCC 43494 / DSM 8903 / Tp8T 6331).